The chain runs to 447 residues: UDP-N-acetylmuramate--L-alanine ligase (447 aa).

108-114 provides a ligand contact to ATP; that stretch reads GSHGKTS.

The protein belongs to the MurCDEF family.

The protein localises to the cytoplasm. It catalyses the reaction UDP-N-acetyl-alpha-D-muramate + L-alanine + ATP = UDP-N-acetyl-alpha-D-muramoyl-L-alanine + ADP + phosphate + H(+). Its pathway is cell wall biogenesis; peptidoglycan biosynthesis. Its function is as follows. Cell wall formation. This is UDP-N-acetylmuramate--L-alanine ligase from Listeria welshimeri serovar 6b (strain ATCC 35897 / DSM 20650 / CCUG 15529 / CIP 8149 / NCTC 11857 / SLCC 5334 / V8).